The sequence spans 454 residues: Bifunctional protein GlmU (454 aa).

The segment at 1–228 (MTLPLHVVIL…PQDVEGANDP (228 aa)) is pyrophosphorylase. UDP-N-acetyl-alpha-D-glucosamine contacts are provided by residues 10 to 13 (LAAG), Lys-24, Gln-76, 81 to 82 (GT), 103 to 105 (YGD), Gly-138, Glu-153, Asn-168, and Asn-226. Mg(2+) is bound at residue Asp-105. Asn-226 lines the Mg(2+) pocket. Residues 229–249 (WQLAQLERAWQLRAARALSLQ) are linker. Positions 250 to 454 (GVRMADPARV…IEGWERPTKK (205 aa)) are N-acetyltransferase. UDP-N-acetyl-alpha-D-glucosamine is bound by residues Arg-332 and Lys-350. Residue His-362 is the Proton acceptor of the active site. 2 residues coordinate UDP-N-acetyl-alpha-D-glucosamine: Tyr-365 and Asn-376. Acetyl-CoA is bound by residues Ala-379, 385-386 (NY), Ser-404, Ala-422, and Arg-439.

This sequence in the N-terminal section; belongs to the N-acetylglucosamine-1-phosphate uridyltransferase family. The protein in the C-terminal section; belongs to the transferase hexapeptide repeat family. In terms of assembly, homotrimer. Mg(2+) is required as a cofactor.

It is found in the cytoplasm. The catalysed reaction is alpha-D-glucosamine 1-phosphate + acetyl-CoA = N-acetyl-alpha-D-glucosamine 1-phosphate + CoA + H(+). It carries out the reaction N-acetyl-alpha-D-glucosamine 1-phosphate + UTP + H(+) = UDP-N-acetyl-alpha-D-glucosamine + diphosphate. Its pathway is nucleotide-sugar biosynthesis; UDP-N-acetyl-alpha-D-glucosamine biosynthesis; N-acetyl-alpha-D-glucosamine 1-phosphate from alpha-D-glucosamine 6-phosphate (route II): step 2/2. The protein operates within nucleotide-sugar biosynthesis; UDP-N-acetyl-alpha-D-glucosamine biosynthesis; UDP-N-acetyl-alpha-D-glucosamine from N-acetyl-alpha-D-glucosamine 1-phosphate: step 1/1. It functions in the pathway bacterial outer membrane biogenesis; LPS lipid A biosynthesis. Its function is as follows. Catalyzes the last two sequential reactions in the de novo biosynthetic pathway for UDP-N-acetylglucosamine (UDP-GlcNAc). The C-terminal domain catalyzes the transfer of acetyl group from acetyl coenzyme A to glucosamine-1-phosphate (GlcN-1-P) to produce N-acetylglucosamine-1-phosphate (GlcNAc-1-P), which is converted into UDP-GlcNAc by the transfer of uridine 5-monophosphate (from uridine 5-triphosphate), a reaction catalyzed by the N-terminal domain. This Xanthomonas oryzae pv. oryzae (strain MAFF 311018) protein is Bifunctional protein GlmU.